Reading from the N-terminus, the 84-residue chain is Cytochrome b559 subunit alpha (84 aa).

The chain crosses the membrane as a helical span at residues 22 to 36; sequence VIHSITIPALFVAGW. Histidine 24 lines the heme pocket.

The protein belongs to the PsbE/PsbF family. In terms of assembly, heterodimer of an alpha subunit and a beta subunit. PSII is composed of 1 copy each of membrane proteins PsbA, PsbB, PsbC, PsbD, PsbE, PsbF, PsbH, PsbI, PsbJ, PsbK, PsbL, PsbM, PsbT, PsbX, PsbY, PsbZ, Psb30/Ycf12, at least 3 peripheral proteins of the oxygen-evolving complex and a large number of cofactors. It forms dimeric complexes. Heme b is required as a cofactor.

Its subcellular location is the plastid. It localises to the chloroplast thylakoid membrane. In terms of biological role, this b-type cytochrome is tightly associated with the reaction center of photosystem II (PSII). PSII is a light-driven water:plastoquinone oxidoreductase that uses light energy to abstract electrons from H(2)O, generating O(2) and a proton gradient subsequently used for ATP formation. It consists of a core antenna complex that captures photons, and an electron transfer chain that converts photonic excitation into a charge separation. The protein is Cytochrome b559 subunit alpha of Porphyra purpurea (Red seaweed).